The primary structure comprises 148 residues: Large ribosomal subunit protein uL13 (148 aa).

Basic and acidic residues-rich tracts occupy residues 71–81 and 89–99; these read GKKEKQKEYHE and DHSHSPEEMRA. Disordered stretches follow at residues 71 to 99 and 125 to 148; these read GKKE…EMRA and KKLK…LDNA.

It belongs to the universal ribosomal protein uL13 family. In terms of assembly, part of the 50S ribosomal subunit.

Functionally, this protein is one of the early assembly proteins of the 50S ribosomal subunit, although it is not seen to bind rRNA by itself. It is important during the early stages of 50S assembly. The polypeptide is Large ribosomal subunit protein uL13 (Salinibacter ruber (strain DSM 13855 / M31)).